We begin with the raw amino-acid sequence, 624 residues long: DNA-directed RNA polymerase subunit gamma (624 aa).

Residues cysteine 70, cysteine 72, cysteine 85, and cysteine 88 each contribute to the Zn(2+) site. Mg(2+) contacts are provided by aspartate 466, aspartate 468, and aspartate 470.

The protein belongs to the RNA polymerase beta' chain family. RpoC1 subfamily. As to quaternary structure, in cyanobacteria the RNAP catalytic core is composed of 2 alpha, 1 beta, 1 beta', 1 gamma and 1 omega subunit. When a sigma factor is associated with the core the holoenzyme is formed, which can initiate transcription. The cofactor is Mg(2+). Zn(2+) is required as a cofactor.

It carries out the reaction RNA(n) + a ribonucleoside 5'-triphosphate = RNA(n+1) + diphosphate. Its function is as follows. DNA-dependent RNA polymerase catalyzes the transcription of DNA into RNA using the four ribonucleoside triphosphates as substrates. The polypeptide is DNA-directed RNA polymerase subunit gamma (Synechococcus elongatus (strain ATCC 33912 / PCC 7942 / FACHB-805) (Anacystis nidulans R2)).